Consider the following 307-residue polypeptide: 4-hydroxythreonine-4-phosphate dehydrogenase (307 aa).

Residues His-126 and Thr-127 each contribute to the substrate site. The a divalent metal cation site is built by His-156, His-195, and His-251. Lys-259, Asn-268, and Arg-277 together coordinate substrate.

Belongs to the PdxA family. As to quaternary structure, homodimer. Zn(2+) serves as cofactor. Mg(2+) is required as a cofactor. It depends on Co(2+) as a cofactor.

It localises to the cytoplasm. The enzyme catalyses 4-(phosphooxy)-L-threonine + NAD(+) = 3-amino-2-oxopropyl phosphate + CO2 + NADH. It participates in cofactor biosynthesis; pyridoxine 5'-phosphate biosynthesis; pyridoxine 5'-phosphate from D-erythrose 4-phosphate: step 4/5. Catalyzes the NAD(P)-dependent oxidation of 4-(phosphooxy)-L-threonine (HTP) into 2-amino-3-oxo-4-(phosphooxy)butyric acid which spontaneously decarboxylates to form 3-amino-2-oxopropyl phosphate (AHAP). The polypeptide is 4-hydroxythreonine-4-phosphate dehydrogenase (Helicobacter pylori (strain G27)).